Reading from the N-terminus, the 382-residue chain is Anhydro-N-acetylmuramic acid kinase (382 aa).

ATP is bound at residue 22-29; it reads GTSMDGVD.

Belongs to the anhydro-N-acetylmuramic acid kinase family.

The enzyme catalyses 1,6-anhydro-N-acetyl-beta-muramate + ATP + H2O = N-acetyl-D-muramate 6-phosphate + ADP + H(+). It functions in the pathway amino-sugar metabolism; 1,6-anhydro-N-acetylmuramate degradation. The protein operates within cell wall biogenesis; peptidoglycan recycling. In terms of biological role, catalyzes the specific phosphorylation of 1,6-anhydro-N-acetylmuramic acid (anhMurNAc) with the simultaneous cleavage of the 1,6-anhydro ring, generating MurNAc-6-P. Is required for the utilization of anhMurNAc either imported from the medium or derived from its own cell wall murein, and thus plays a role in cell wall recycling. The sequence is that of Anhydro-N-acetylmuramic acid kinase from Burkholderia ambifaria (strain ATCC BAA-244 / DSM 16087 / CCUG 44356 / LMG 19182 / AMMD) (Burkholderia cepacia (strain AMMD)).